The primary structure comprises 458 residues: ATP synthase subunit beta (458 aa).

148–155 contributes to the ATP binding site; that stretch reads GGAGVGKT.

The protein belongs to the ATPase alpha/beta chains family. In terms of assembly, F-type ATPases have 2 components, CF(1) - the catalytic core - and CF(0) - the membrane proton channel. CF(1) has five subunits: alpha(3), beta(3), gamma(1), delta(1), epsilon(1). CF(0) has three main subunits: a(1), b(2) and c(9-12). The alpha and beta chains form an alternating ring which encloses part of the gamma chain. CF(1) is attached to CF(0) by a central stalk formed by the gamma and epsilon chains, while a peripheral stalk is formed by the delta and b chains.

It is found in the cell inner membrane. The catalysed reaction is ATP + H2O + 4 H(+)(in) = ADP + phosphate + 5 H(+)(out). Functionally, produces ATP from ADP in the presence of a proton gradient across the membrane. The catalytic sites are hosted primarily by the beta subunits. The polypeptide is ATP synthase subunit beta (Shewanella loihica (strain ATCC BAA-1088 / PV-4)).